The sequence spans 452 residues: Eukaryotic translation initiation factor 3 subunit E (452 aa).

Over residues 1–17 the composition is skewed to polar residues; it reads MADNTPTTANDLLNDAT. Residues 1–23 are disordered; the sequence is MADNTPTTANDLLNDATQAAAKS. Positions 246-426 constitute a PCI domain; that stretch reads PFFNHEPARD…GTVVMNHPPS (181 aa).

This sequence belongs to the eIF-3 subunit E family. In terms of assembly, component of the eukaryotic translation initiation factor 3 (eIF-3) complex.

The protein localises to the cytoplasm. Functionally, component of the eukaryotic translation initiation factor 3 (eIF-3) complex, which is involved in protein synthesis of a specialized repertoire of mRNAs and, together with other initiation factors, stimulates binding of mRNA and methionyl-tRNAi to the 40S ribosome. The eIF-3 complex specifically targets and initiates translation of a subset of mRNAs involved in cell proliferation. This Botryotinia fuckeliana (strain B05.10) (Noble rot fungus) protein is Eukaryotic translation initiation factor 3 subunit E (int6).